Reading from the N-terminus, the 468-residue chain is UDP-N-acetylmuramate--L-alanine ligase (468 aa).

G114–T120 contacts ATP.

Belongs to the MurCDEF family.

It localises to the cytoplasm. It carries out the reaction UDP-N-acetyl-alpha-D-muramate + L-alanine + ATP = UDP-N-acetyl-alpha-D-muramoyl-L-alanine + ADP + phosphate + H(+). It participates in cell wall biogenesis; peptidoglycan biosynthesis. Cell wall formation. This is UDP-N-acetylmuramate--L-alanine ligase from Methylorubrum populi (strain ATCC BAA-705 / NCIMB 13946 / BJ001) (Methylobacterium populi).